Here is an 89-residue protein sequence, read N- to C-terminus: Cell division topological specificity factor (89 aa).

This sequence belongs to the MinE family.

Functionally, prevents the cell division inhibition by proteins MinC and MinD at internal division sites while permitting inhibition at polar sites. This ensures cell division at the proper site by restricting the formation of a division septum at the midpoint of the long axis of the cell. The polypeptide is Cell division topological specificity factor (Photorhabdus laumondii subsp. laumondii (strain DSM 15139 / CIP 105565 / TT01) (Photorhabdus luminescens subsp. laumondii)).